Here is a 278-residue protein sequence, read N- to C-terminus: Envelope glycoprotein L (278 aa).

A signal peptide spans 1 to 30 (MCRRPDCGFSFSPGPVILLWCCLLLPIVSS). The region spanning 43-256 (VPAECPELTR…DKYYAGLPPE (214 aa)) is the gL betaherpesvirus-type domain. Cys-154 and Cys-159 are disulfide-bonded.

Belongs to the herpesviridae glycoprotein L (gL) family. Betaherpesvirinae gL subfamily. As to quaternary structure, interacts with glycoprotein H (gH); this interaction is necessary for the correct processing and cell surface expression of gH. Forms the envelope pentamer complex (PC) composed of gH, gL, UL128, UL130, and UL131A. The pentamer interacts with host NRP2. Forms the envelope trimer complex composed of gH, gL, and gO. The trimer interacts with host PDGFRA. The trimer also interacts with host EPHA2.

Its subcellular location is the virion membrane. The protein localises to the host cell membrane. The protein resides in the host Golgi apparatus. It is found in the host trans-Golgi network. Functionally, the heterodimer glycoprotein H-glycoprotein L is required for the fusion of viral and plasma membranes leading to virus entry into the host cell. Acts as a functional inhibitor of gH and maintains gH in an inhibited form. Upon binding to host integrins, gL dissociates from gH leading to activation of the viral fusion glycoproteins gB and gH. In human cytomegalovirus, forms two distincts complexes to mediate viral entry, a trimer and a pentamer at the surface of the virion envelope. The gH-gL-gO trimer is required for infection in fibroblasts by interacting with host PDGFRA, and in glioblastoma cells by interacting with host EPHA2. The gH-gL-UL128-UL130-UL131A pentamer is essential for viral entry in epithelial, endothelial and myeloid cells via interaction with host NRP2. The chain is Envelope glycoprotein L from Human cytomegalovirus (strain 5035) (HHV-5).